Here is a 1396-residue protein sequence, read N- to C-terminus: MRPFIDDAKRRAERRLSASRQSISARRMFASSFPDRLKVDADDAQMDYTAPPSSNDSRDGMQYMQQSVMSLIAAVGSRTDLRARFDDSSDSEEETRTRPRFLSEKPFDQQITASPRADVTLHVPSAPETRSSSRERGRRHRRSISEHKLFRPFKAGSASQDKKQDASPDPGPSTSDRLSPIPVLPRPRSATPRAAPILSRMVEARALLETENPEENPQTLEEKEQGVSKKSQVSPLSRQLMEMFRFPTPEKVVVEYACSLLQSMLLQGYMYVTEGHICFYAYLPRQSTRVIKSGYIYKRGRKNPKYNRYWFSLKEDVLSYYADPSNLYFPSGQIDLRYGISASLTEPKDKSRESRDFQVTTDHRTYYFRADSSVNAKEWVRALQKVIFRTHNEGESIKVAFPIENILDVEESPMVEFAQTFKIRVVESEETYAIDEHYFTFFDPDSGRRAFDLLKGLISGTPTRSPPGLSPLPDHTAQPRRSRGSQNRWSLTSGSKSQVVSTRRQRSASTSILGSGTGNENSPQRQEDSSSSFFNSIDQVTESSAVLQSITDTTESASQILNRSDVFQSPTIHTWQQRTSGTARSNRRHSDEITRSTTEHGLDGISLARDGPEMQYTNSDSEQESKDASRLYSAVALNEIVKAGTYPLQRAAGLAGYLKSRSKEMSNLLATESMGYIEKVSGMWAGGRRHYGETDGLLPDDRALYPETAEESLRDRERFRAHFALPPTEKLEAAYFAYLHRALPLYGKIYISQNRLCFRSLLPGTRTKMILPLHDIENVEKEKGFQFGYHGLVVVIRGHEELFFEFNAADARDDCAVTLHQRLESAKFLVESISLSQQETDESEAAKVEHRMLQEARRNASAEQDLRPGLSESSELHSIFDDPRASIVNFKPAEPLKITCLTIGSRGDVQPYIALCKGLLAEGHKPKIATHAEFEPWVRKHGIDFAPVDGDPAELMRLCVENGMFTYSFLKEATAKFRGWIDDLLSSAWRACQDSDLLIESPSAMAGIHIAEALRIPYFRGFTMPWSRTRAYPHAFAVPESRLGGAYNYITYVMFENVFWRAIAGQVNRWRMKELGLRATNLDKMQPNKVPFLYNFSPSVVPPPLDFPDWVRITGYWFLSESSDWTPPRALAEFIQCARQDGKKIVYIGFGSIVVSDPSALTRTVVESVQKADVRCILSKGWSARLGDPTSTKVEIPLPPEIHQIQSAPHDWLFSQIDAAAHHGGAGTTGASLRAGVPTIIKPFFGDQFFFGNRVEDLGVGICMKKLNVSVFSRALWTATHDERMIVRAKQLGERIRSEDGVATAIQAIYRDLEYATTLTRQRSSISSTPFSPTPSTKTSDDQNANDDIADIEDWTFIGDESDLEFPRRARERAVSGADNIPERTILGSRSIYADS.

Over residues methionine 1–leucine 16 the composition is skewed to basic and acidic residues. 4 disordered regions span residues methionine 1 to glutamine 21, aspartate 40 to methionine 64, alanine 83 to proline 196, and glutamate 209 to glutamine 232. The span at glutamate 94–phenylalanine 107 shows a compositional bias: basic and acidic residues. Positions arginine 186 to proline 196 are enriched in low complexity. One can recognise a GRAM 1 domain in the interval arginine 238–threonine 273. The 100-residue stretch at arginine 289–phenylalanine 388 folds into the PH domain. Disordered stretches follow at residues glycine 460–serine 532 and threonine 571–aspartate 627. 2 stretches are compositionally biased toward polar residues: residues glycine 484–serine 532 and threonine 571–arginine 584. Residues arginine 588–leucine 602 are compositionally biased toward basic and acidic residues. A GRAM 2 domain is found at glutamate 717–lysine 783. UDP-alpha-D-glucose is bound by residues serine 905, arginine 906, aspartate 908, alanine 1208, histidine 1210, histidine 1223, glycine 1227, threonine 1228, aspartate 1247, and glutamine 1248. Low complexity predominate over residues serine 1324–glutamine 1343. A disordered region spans residues serine 1324 to asparagine 1346.

It belongs to the glycosyltransferase 28 family.

It localises to the cytoplasm. The protein resides in the preautophagosomal structure membrane. It carries out the reaction a sterol + UDP-alpha-D-glucose = a sterol 3-beta-D-glucoside + UDP + H(+). The enzyme catalyses ergosterol + UDP-alpha-D-glucose = ergosteryl 3-beta-D-glucoside + UDP + H(+). Functionally, sterol glycosyltransferase responsible for the glycosylation of ergosterol to form ergosterol-glucoside. This Emericella nidulans (strain FGSC A4 / ATCC 38163 / CBS 112.46 / NRRL 194 / M139) (Aspergillus nidulans) protein is Sterol 3-beta-glucosyltransferase.